Reading from the N-terminus, the 544-residue chain is Lysophosphatidylcholine acyltransferase 2 (544 aa).

Topologically, residues 1 to 58 (MNRCAEAAAVAATVPGSGVGDSGLRPPMVPRQASFFPPPVPNPFVQQTRISAARRLQM) are cytoplasmic. Residues 59 to 79 (ILLGIILLPVRALLVGLVLLL) form a helical; Signal-anchor for type II membrane protein membrane-spanning segment. The Lumenal segment spans residues 80 to 544 (AWPFAVISTV…EEGTSGKKVD (465 aa)). The HXXXXD motif motif lies at 146-151 (HSTFFD). The short motif at 220 to 223 (EGTC) is the EGTC motif element. EF-hand domains follow at residues 391–426 (PVSDVLRQLFALFDRNNDGSIDFREYVIGLAVLCNP) and 428–463 (NTEDIIQVAFKLFDVDEDGYITEEEFCTILQASLGV). Positions 404, 406, 408, 410, 415, 441, 443, 445, 447, and 452 each coordinate Ca(2+). Over residues 520 to 530 (TAPSVASNKVS) the composition is skewed to polar residues. The interval 520–544 (TAPSVASNKVSPESHEEGTSGKKVD) is disordered. Basic and acidic residues predominate over residues 531–544 (PESHEEGTSGKKVD).

Belongs to the 1-acyl-sn-glycerol-3-phosphate acyltransferase family.

Its subcellular location is the endoplasmic reticulum membrane. The protein resides in the golgi apparatus membrane. The protein localises to the cell membrane. It localises to the lipid droplet. The catalysed reaction is a 1-acyl-sn-glycero-3-phosphocholine + an acyl-CoA = a 1,2-diacyl-sn-glycero-3-phosphocholine + CoA. It catalyses the reaction a 1-O-alkyl-sn-glycero-3-phosphocholine + acetyl-CoA = a 1-O-alkyl-2-acetyl-sn-glycero-3-phosphocholine + CoA. The enzyme catalyses a 1-acyl-sn-glycero-3-phosphate + an acyl-CoA = a 1,2-diacyl-sn-glycero-3-phosphate + CoA. It carries out the reaction a 1-O-(1Z-alkenyl)-sn-glycero-3-phosphocholine + an acyl-CoA = a 1-O-(1Z-alkenyl)-2-acyl-sn-glycero-3-phosphocholine + CoA. The catalysed reaction is 1-hexadecanoyl-sn-glycero-3-phosphate + (9Z)-octadecenoyl-CoA = 1-hexadecanoyl-2-(9Z-octadecenoyl)-sn-glycero-3-phosphate + CoA. It catalyses the reaction 1-(9Z-octadecenoyl)-sn-glycero-3-phosphate + (9Z)-octadecenoyl-CoA = 1,2-di-(9Z-octadecenoyl)-sn-glycero-3-phosphate + CoA. The enzyme catalyses 1-(9Z-octadecenoyl)-sn-glycero-3-phosphate + hexadecanoyl-CoA = 1-(9Z)-octadecenoyl-2-hexadecanoyl-sn-glycero-3-phosphate + CoA. It carries out the reaction 1-heptadecanoyl-sn-glycero-3-phosphate + (9Z)-octadecenoyl-CoA = 1-heptadecanoyl-2-(9Z)-octadecenoyl-sn-glycero-3-phosphate + CoA. The catalysed reaction is 1-octadecanoyl-sn-glycero-3-phosphate + (9Z)-octadecenoyl-CoA = 1-octadecanoyl-2-(9Z-octadecenoyl)-sn-glycero-3-phosphate + CoA. It catalyses the reaction heptadecanoyl-CoA + 1-(9Z-octadecenoyl)-sn-glycero-3-phosphate = 1-(9Z)-octadecenoyl-2-heptadecanoyl-sn-glycero-3-phosphate + CoA. The enzyme catalyses 1-(9Z-octadecenoyl)-sn-glycero-3-phosphate + (9Z,12Z)-octadecadienoyl-CoA = 1-(9Z)-octadecenoyl-2-(9Z,12Z)-octadecadienoyl-sn-glycero-3-phosphate + CoA. It carries out the reaction 1-(9Z-octadecenoyl)-sn-glycero-3-phosphate + tetradecanoyl-CoA = 1-(9Z)-octadecenoyl-2-tetradecanoyl-sn-glycero-3-phosphate + CoA. The catalysed reaction is pentadecanoyl-CoA + 1-(9Z-octadecenoyl)-sn-glycero-3-phosphate = 1-(9Z)-octadecenoyl-2-pentadecanoyl-sn-glycero-3-phosphate + CoA. It catalyses the reaction nonadecanoyl-CoA + 1-(9Z-octadecenoyl)-sn-glycero-3-phosphate = 1-(9Z)-octadecenoyl-2-nonadecanoyl-sn-glycero-3-phosphate + CoA. The enzyme catalyses 1-hexadecanoyl-sn-glycero-3-phosphocholine + (9Z)-octadecenoyl-CoA = 1-hexadecanoyl-2-(9Z-octadecenoyl)-sn-glycero-3-phosphocholine + CoA. It carries out the reaction 1-O-hexadecyl-sn-glycero-3-phosphocholine + acetyl-CoA = 1-O-hexadecyl-2-acetyl-sn-glycero-3-phosphocholine + CoA. The catalysed reaction is 1-O-octadecyl-sn-glycero-3-phosphocholine + acetyl-CoA = 1-O-octadecyl-2-acetyl-sn-glycero-3-phosphocholine + CoA. It catalyses the reaction 1-hexadecanoyl-sn-glycero-3-phosphocholine + acetyl-CoA = 1-hexadecanoyl-2-acetyl-sn-glycero-3-phosphocholine + CoA. The enzyme catalyses 1-octadecanoyl-sn-glycero-3-phosphocholine + acetyl-CoA = 1-octadecanoyl-2-acetyl-sn-glycero-3-phosphocholine + CoA. It carries out the reaction a 1-O-(1Z-alkenyl)-sn-glycero-3-phosphocholine + acetyl-CoA = 1-O-(1Z)-alkenyl-2-acetyl-sn-glycero-3-phosphocholine + CoA. The catalysed reaction is 1-O-octadecyl-sn-glycero-3-phosphocholine + (5Z,8Z,11Z,14Z)-eicosatetraenoyl-CoA = 1-O-octadecyl-2-(5Z,8Z,11Z,14Z)-eicosatetraenoyl-sn-glycero-3-phosphocholine + CoA. It functions in the pathway lipid metabolism; phospholipid metabolism. Functionally, exhibits both acyltransferase and acetyltransferase activities. Activity is calcium-dependent. Catalyzes the conversion of lysophosphatidylcholine (1-acyl-sn-glycero-3-phosphocholine or LPC) into phosphatidylcholine (1,2-diacyl-sn-glycero-3-phosphocholine or PC). Catalyzes the conversion 1-acyl-sn-glycerol-3-phosphate (lysophosphatidic acid or LPA) into 1,2-diacyl-sn-glycerol-3-phosphate (phosphatidic acid or PA) by incorporating an acyl moiety at the sn-2 position of the glycerol backbone. Involved in platelet-activating factor (PAF) biosynthesis by catalyzing the conversion of the PAF precursor, 1-O-alkyl-sn-glycero-3-phosphocholine (lyso-PAF) into 1-O-alkyl-2-acetyl-sn-glycero-3-phosphocholine (PAF). Also converts lyso-PAF to 1-O-alkyl-2-acyl-sn-glycero-3-phosphocholine (PC), a major component of cell membranes and a PAF precursor. Under resting conditions, acyltransferase activity is preferred. Upon acute inflammatory stimulus, acetyltransferase activity is enhanced and PAF synthesis increases. Involved in the regulation of lipid droplet number and size. This is Lysophosphatidylcholine acyltransferase 2 (Lpcat2) from Rattus norvegicus (Rat).